Reading from the N-terminus, the 271-residue chain is Shikimate dehydrogenase (NADP(+)) (271 aa).

Residues S19–S21 and T65 contribute to the shikimate site. The active-site Proton acceptor is the K69. E81 contacts NADP(+). N90 and D105 together coordinate shikimate. NADP(+)-binding positions include G128–A132, N150–K155, and I211. Residue Y213 coordinates shikimate. NADP(+) is bound at residue G234.

Belongs to the shikimate dehydrogenase family. As to quaternary structure, homodimer.

It catalyses the reaction shikimate + NADP(+) = 3-dehydroshikimate + NADPH + H(+). Its pathway is metabolic intermediate biosynthesis; chorismate biosynthesis; chorismate from D-erythrose 4-phosphate and phosphoenolpyruvate: step 4/7. Functionally, involved in the biosynthesis of the chorismate, which leads to the biosynthesis of aromatic amino acids. Catalyzes the reversible NADPH linked reduction of 3-dehydroshikimate (DHSA) to yield shikimate (SA). The chain is Shikimate dehydrogenase (NADP(+)) from Pyrococcus furiosus (strain ATCC 43587 / DSM 3638 / JCM 8422 / Vc1).